A 342-amino-acid chain; its full sequence is uncharacterized protein (342 aa).

Leu9–Ser31 is an NADP(+) binding site. Ser208 provides a ligand contact to substrate. The Proton acceptor role is filled by Tyr222.

This sequence belongs to the short-chain dehydrogenases/reductases (SDR) family.

This is an uncharacterized protein from Acanthamoeba polyphaga (Amoeba).